Reading from the N-terminus, the 225-residue chain is Glutathione S-transferase U2 (225 aa).

The 80-residue stretch at 6-85 (ESVKLLGFWI…YIDQTWNNNP (80 aa)) folds into the GST N-terminal domain. Residues 16-17 (SP), 42-43 (KK), 56-57 (KV), and 69-70 (ES) contribute to the glutathione site. The 128-residue stretch at 90 to 217 (DPYEKAMVRF…EKHIERMKKI (128 aa)) folds into the GST C-terminal domain. The residue at position 151 (threonine 151) is a Phosphothreonine.

The protein belongs to the GST superfamily. Tau family.

The protein resides in the cytoplasm. Its subcellular location is the cytosol. The catalysed reaction is RX + glutathione = an S-substituted glutathione + a halide anion + H(+). Functionally, may be involved in the conjugation of reduced glutathione to a wide number of exogenous and endogenous hydrophobic electrophiles and have a detoxification role against certain herbicides. This Arabidopsis thaliana (Mouse-ear cress) protein is Glutathione S-transferase U2 (GSTU2).